A 432-amino-acid polypeptide reads, in one-letter code: Serine hydroxymethyltransferase (432 aa).

(6S)-5,6,7,8-tetrahydrofolate is bound by residues leucine 127 and glycine 131–leucine 133. Position 236 is an N6-(pyridoxal phosphate)lysine (lysine 236).

It belongs to the SHMT family. In terms of assembly, homodimer. Requires pyridoxal 5'-phosphate as cofactor.

It is found in the cytoplasm. It catalyses the reaction (6R)-5,10-methylene-5,6,7,8-tetrahydrofolate + glycine + H2O = (6S)-5,6,7,8-tetrahydrofolate + L-serine. It functions in the pathway one-carbon metabolism; tetrahydrofolate interconversion. Its pathway is amino-acid biosynthesis; glycine biosynthesis; glycine from L-serine: step 1/1. In terms of biological role, catalyzes the reversible interconversion of serine and glycine with tetrahydrofolate (THF) serving as the one-carbon carrier. This reaction serves as the major source of one-carbon groups required for the biosynthesis of purines, thymidylate, methionine, and other important biomolecules. Also exhibits THF-independent aldolase activity toward beta-hydroxyamino acids, producing glycine and aldehydes, via a retro-aldol mechanism. This Rhizobium rhizogenes (strain K84 / ATCC BAA-868) (Agrobacterium radiobacter) protein is Serine hydroxymethyltransferase.